The following is a 132-amino-acid chain: UPF0292 protein PH1700 (132 aa).

Residues 20–100 form the Toprim domain; that stretch reads EGAIIVEGAR…KVDTETRREL (81 aa). Glu26, Asp69, and Asp71 together coordinate Mg(2+).

Belongs to the UPF0292 family. Requires Mg(2+) as cofactor.

The polypeptide is UPF0292 protein PH1700 (Pyrococcus horikoshii (strain ATCC 700860 / DSM 12428 / JCM 9974 / NBRC 100139 / OT-3)).